Here is a 575-residue protein sequence, read N- to C-terminus: Sclareol synthase, chloroplastic (575 aa).

The N-terminal 51 residues, 1 to 51 (MSLAFNVGVTPFSGQRVGSRKEKFPVQGFPVTTPNRSRLIVNCSLTTIDFM), are a transit peptide targeting the chloroplast. Mg(2+) contacts are provided by aspartate 329, aspartate 333, asparagine 473, serine 477, and glutamate 481. A DDXXD motif motif is present at residues 329-333 (DDFFD).

It belongs to the terpene synthase family.

The protein resides in the plastid. The protein localises to the chloroplast. The catalysed reaction is 8-hydroxycopalyl diphosphate + H2O = sclareol + diphosphate. The protein operates within secondary metabolite biosynthesis; terpenoid biosynthesis. Functionally, involved in the biosynthesis of labdane-type diterpenoid including sclareol, a diterpene-diol that is used as fragrance and flavoring, and has anticancer effects (able to kill leukemic and colon cancer cells by apoptosis). Sclareol can also be used as synthesis precursor of ambergris substitution fragance products such as ambrox. Terpene synthase that catalyzes the conversion of 8-hydroxy-copalyl diphosphate to sclareol. In Salvia sclarea (Clary sage), this protein is Sclareol synthase, chloroplastic.